The chain runs to 321 residues: Lipoyl synthase (321 aa).

The [4Fe-4S] cluster site is built by cysteine 68, cysteine 73, cysteine 79, cysteine 94, cysteine 98, cysteine 101, and serine 308. Residues 80–297 (FNHGTATFMI…KAAAMDMGFT (218 aa)) enclose the Radical SAM core domain.

This sequence belongs to the radical SAM superfamily. Lipoyl synthase family. [4Fe-4S] cluster serves as cofactor.

It localises to the cytoplasm. The catalysed reaction is [[Fe-S] cluster scaffold protein carrying a second [4Fe-4S](2+) cluster] + N(6)-octanoyl-L-lysyl-[protein] + 2 oxidized [2Fe-2S]-[ferredoxin] + 2 S-adenosyl-L-methionine + 4 H(+) = [[Fe-S] cluster scaffold protein] + N(6)-[(R)-dihydrolipoyl]-L-lysyl-[protein] + 4 Fe(3+) + 2 hydrogen sulfide + 2 5'-deoxyadenosine + 2 L-methionine + 2 reduced [2Fe-2S]-[ferredoxin]. It functions in the pathway protein modification; protein lipoylation via endogenous pathway; protein N(6)-(lipoyl)lysine from octanoyl-[acyl-carrier-protein]: step 2/2. Functionally, catalyzes the radical-mediated insertion of two sulfur atoms into the C-6 and C-8 positions of the octanoyl moiety bound to the lipoyl domains of lipoate-dependent enzymes, thereby converting the octanoylated domains into lipoylated derivatives. This is Lipoyl synthase from Erwinia tasmaniensis (strain DSM 17950 / CFBP 7177 / CIP 109463 / NCPPB 4357 / Et1/99).